We begin with the raw amino-acid sequence, 96 residues long: Protein RnfH (96 aa).

It belongs to the UPF0125 (RnfH) family.

The protein is Protein RnfH of Citrobacter koseri (strain ATCC BAA-895 / CDC 4225-83 / SGSC4696).